The primary structure comprises 431 residues: tRNA(Ile)-lysidine synthase (431 aa).

26–31 (SGGVDS) lines the ATP pocket.

Belongs to the tRNA(Ile)-lysidine synthase family.

The protein resides in the cytoplasm. The catalysed reaction is cytidine(34) in tRNA(Ile2) + L-lysine + ATP = lysidine(34) in tRNA(Ile2) + AMP + diphosphate + H(+). In terms of biological role, ligates lysine onto the cytidine present at position 34 of the AUA codon-specific tRNA(Ile) that contains the anticodon CAU, in an ATP-dependent manner. Cytidine is converted to lysidine, thus changing the amino acid specificity of the tRNA from methionine to isoleucine. The sequence is that of tRNA(Ile)-lysidine synthase from Wolbachia pipientis wMel.